Reading from the N-terminus, the 209-residue chain is Uracil phosphoribosyltransferase (209 aa).

5-phospho-alpha-D-ribose 1-diphosphate contacts are provided by residues Arg-79, Arg-104, and 131–139 (DPMLATGGS). Uracil is bound by residues Ile-194 and 199-201 (GDA). Asp-200 contributes to the 5-phospho-alpha-D-ribose 1-diphosphate binding site.

This sequence belongs to the UPRTase family. The cofactor is Mg(2+).

It catalyses the reaction UMP + diphosphate = 5-phospho-alpha-D-ribose 1-diphosphate + uracil. It functions in the pathway pyrimidine metabolism; UMP biosynthesis via salvage pathway; UMP from uracil: step 1/1. Allosterically activated by GTP. Functionally, catalyzes the conversion of uracil and 5-phospho-alpha-D-ribose 1-diphosphate (PRPP) to UMP and diphosphate. The chain is Uracil phosphoribosyltransferase from Pediococcus pentosaceus (strain ATCC 25745 / CCUG 21536 / LMG 10740 / 183-1w).